A 1523-amino-acid chain; its full sequence is Rho GTPase-activating protein gacHH (1523 aa).

Kelch repeat units lie at residues aspartate 30 to serine 76, lysine 83 to aspartate 133, and tyrosine 135 to proline 184. 2 stretches are compositionally biased toward polar residues: residues asparagine 161 to glycine 173 and proline 184 to glutamine 194. The tract at residues asparagine 161 to threonine 256 is disordered. The span at serine 195–serine 211 shows a compositional bias: low complexity. The span at alanine 212 to proline 221 shows a compositional bias: polar residues. Positions asparagine 227–asparagine 244 are enriched in low complexity. 3 Kelch repeats span residues lysine 335 to serine 384, leucine 386 to serine 441, and isoleucine 443 to serine 496. Disordered regions lie at residues leucine 510 to asparagine 569, glutamine 609 to aspartate 631, and asparagine 647 to serine 671. Gly residues predominate over residues glycine 615–glycine 626. Residues cysteine 690–serine 729 are a coiled coil. The disordered stretch occupies residues asparagine 748 to leucine 786. Positions tyrosine 812–phenylalanine 840 form a coiled coil. Disordered stretches follow at residues serine 861–glutamine 881, leucine 905–leucine 927, threonine 963–threonine 991, serine 1006–lysine 1096, and asparagine 1143–isoleucine 1194. The span at glutamine 870–glutamine 881 shows a compositional bias: low complexity. The segment covering leucine 905–valine 915 has biased composition (basic and acidic residues). Composition is skewed to low complexity over residues proline 971–glutamine 981, serine 1012–asparagine 1030, glutamine 1043–glutamine 1079, and asparagine 1143–leucine 1153. Residues leucine 1151–phenylalanine 1228 are a coiled coil. Residues serine 1155–isoleucine 1194 are compositionally biased toward basic and acidic residues. The Rho-GAP domain maps to serine 1233–phenylalanine 1411. Residues aspartate 1425 to isoleucine 1482 are disordered. Residues serine 1430–threonine 1476 show a composition bias toward low complexity.

It is found in the cytoplasm. Functionally, rho GTPase-activating protein involved in the signal transduction pathway. In Dictyostelium discoideum (Social amoeba), this protein is Rho GTPase-activating protein gacHH (gacHH).